Consider the following 99-residue polypeptide: Protein S100-A11 (99 aa).

Met1 is modified (N-acetylmethionine). At Thr8 the chain carries Phosphothreonine. EF-hand domains are found at residues 10–47 (RCIE…ELAA) and 53–88 (KDPG…LAIA). 8 residues coordinate Ca(2+): Asn29, Lys31, Glu36, Asp66, Asp68, Asp70, Gln72, and Glu77.

The protein belongs to the S-100 family. Homodimer; disulfide-linked. Phosphorylation at Thr-8 significantly suppresses homodimerization and promotes association with NCL/nucleolin which induces nuclear translocation.

It is found in the cytoplasm. It localises to the nucleus. Its function is as follows. Facilitates the differentiation and the cornification of keratinocytes. This is Protein S100-A11 (S100A11) from Sus scrofa (Pig).